The sequence spans 131 residues: Large ribosomal subunit protein bL17 (131 aa).

The protein belongs to the bacterial ribosomal protein bL17 family. As to quaternary structure, part of the 50S ribosomal subunit. Contacts protein L32.

The chain is Large ribosomal subunit protein bL17 from Shewanella baltica (strain OS223).